The chain runs to 300 residues: uncharacterized protein (300 aa).

10 helical membrane passes run 4-24 (IIIIMLFFLVSITWGTTWIAM), 31-51 (IPPFFATGIRFLAASPLLIIL), 68-88 (FQIFISIFYFSIPFTLMLYGG), 95-115 (ISSIIFANMPVLVLIISHFYL), 120-140 (NFIQKVGMVIALITLFFVLLI), 146-166 (CFFQWKGILALLLALLSHAVI), 177-197 (VSVITFNALPSLISGIFLSII), 214-234 (ILAVFYLGNFCGICGILSYFY), 242-262 (FYASIVFLIFPLIAGFLEIYI), and 272-292 (LWFIIPSGLGILLTLIPINFF). 2 EamA domains span residues 15 to 139 (ITWG…FVLL) and 161 to 287 (LSHA…LTLI).

It belongs to the EamA transporter family.

It localises to the cell membrane. This is an uncharacterized protein from Buchnera aphidicola subsp. Schizaphis graminum (strain Sg).